The primary structure comprises 755 residues: Polyribonucleotide nucleotidyltransferase (755 aa).

Residues D493 and D499 each contribute to the Mg(2+) site. Positions 560 to 619 (PRIMTIQIPVDKIGALIGPGGKTIRNICDTTGAQIDIEDDGRVFITAPDGEAAKKAISMI) constitute a KH domain. The S1 motif domain maps to 629 to 698 (GDIFLGKVVS…NTGKISLSRR (70 aa)). The interval 704–755 (ETPEARKAAGAAPRPRPREEQRGGREEPRSLREELRGPRRDGERPRPRRRDD) is disordered. Positions 719-755 (RPREEQRGGREEPRSLREELRGPRRDGERPRPRRRDD) are enriched in basic and acidic residues.

Belongs to the polyribonucleotide nucleotidyltransferase family. Mg(2+) serves as cofactor.

Its subcellular location is the cytoplasm. It carries out the reaction RNA(n+1) + phosphate = RNA(n) + a ribonucleoside 5'-diphosphate. In terms of biological role, involved in mRNA degradation. Catalyzes the phosphorolysis of single-stranded polyribonucleotides processively in the 3'- to 5'-direction. This Chloroflexus aggregans (strain MD-66 / DSM 9485) protein is Polyribonucleotide nucleotidyltransferase.